Here is a 430-residue protein sequence, read N- to C-terminus: Glutamate-1-semialdehyde 2,1-aminomutase (430 aa).

K267 is modified (N6-(pyridoxal phosphate)lysine).

The protein belongs to the class-III pyridoxal-phosphate-dependent aminotransferase family. HemL subfamily. Homodimer. Pyridoxal 5'-phosphate serves as cofactor.

Its subcellular location is the cytoplasm. The enzyme catalyses (S)-4-amino-5-oxopentanoate = 5-aminolevulinate. The protein operates within porphyrin-containing compound metabolism; protoporphyrin-IX biosynthesis; 5-aminolevulinate from L-glutamyl-tRNA(Glu): step 2/2. The sequence is that of Glutamate-1-semialdehyde 2,1-aminomutase from Lawsonia intracellularis (strain PHE/MN1-00).